A 619-amino-acid chain; its full sequence is DNA polymerase II small subunit (619 aa).

The disordered stretch occupies residues 78 to 122 (EEAEKTVESQETRASELEEGGVSQVSSGELQELKEESPEISTTEE). Residues 79 to 93 (EAEKTVESQETRASE) are compositionally biased toward basic and acidic residues.

Belongs to the DNA polymerase delta/II small subunit family. In terms of assembly, heterodimer of a large subunit and a small subunit.

The catalysed reaction is DNA(n) + a 2'-deoxyribonucleoside 5'-triphosphate = DNA(n+1) + diphosphate. It carries out the reaction Exonucleolytic cleavage in the 3'- to 5'-direction to yield nucleoside 5'-phosphates.. Its function is as follows. Possesses two activities: a DNA synthesis (polymerase) and an exonucleolytic activity that degrades single-stranded DNA in the 3' to 5' direction. Has a template-primer preference which is characteristic of a replicative DNA polymerase. This chain is DNA polymerase II small subunit (polB), found in Pyrococcus abyssi (strain GE5 / Orsay).